Here is a 339-residue protein sequence, read N- to C-terminus: D-erythrose-4-phosphate dehydrogenase (339 aa).

NAD(+) contacts are provided by residues 12–13 and arginine 81; that span reads RI. Substrate-binding positions include 154–156, arginine 200, 213–214, and arginine 236; these read SCT and TR. Residue cysteine 155 is the Nucleophile of the active site. Asparagine 318 serves as a coordination point for NAD(+).

The protein belongs to the glyceraldehyde-3-phosphate dehydrogenase family. Epd subfamily. In terms of assembly, homotetramer.

Its subcellular location is the cytoplasm. It carries out the reaction D-erythrose 4-phosphate + NAD(+) + H2O = 4-phospho-D-erythronate + NADH + 2 H(+). It participates in cofactor biosynthesis; pyridoxine 5'-phosphate biosynthesis; pyridoxine 5'-phosphate from D-erythrose 4-phosphate: step 1/5. In terms of biological role, catalyzes the NAD-dependent conversion of D-erythrose 4-phosphate to 4-phosphoerythronate. This Cronobacter sakazakii (strain ATCC BAA-894) (Enterobacter sakazakii) protein is D-erythrose-4-phosphate dehydrogenase.